The primary structure comprises 288 residues: General transcription factor IIE subunit 2 (288 aa).

A disordered region spans residues 16–56; sequence ALTTPAVEKRPSASSESSKKKRAKLELSSTSGSKPSSDGSN. The segment covering 41 to 56 has biased composition (low complexity); it reads ELSSTSGSKPSSDGSN. Residues 63 to 143 constitute a DNA-binding region (TFIIE beta); it reads SLSGSSGYKF…YAFKPKYNLK (81 aa).

This sequence belongs to the TFIIE beta subunit family. Tetramer of two alpha and two beta chains.

It localises to the nucleus. Recruits TFIIH to the initiation complex and stimulates the RNA polymerase II C-terminal domain kinase and DNA-dependent ATPase activities of TFIIH. Both TFIIH and TFIIE are required for promoter clearance by RNA polymerase. The sequence is that of General transcription factor IIE subunit 2 (gtf2e2) from Xenopus laevis (African clawed frog).